We begin with the raw amino-acid sequence, 491 residues long: Putative mannan endo-1,4-beta-mannosidase 5 (491 aa).

Positions 1-31 (METSYREEEARRKASLLHCIFFFLLGALAMA) are cleaved as a signal peptide. Substrate is bound by residues Trp134 and Asn248. Glu249 acts as the Proton donor in catalysis. Tyr330 serves as a coordination point for substrate. The Nucleophile role is filled by Glu372. An N-linked (GlcNAc...) asparagine glycan is attached at Asn385. Trp416 contributes to the substrate binding site. An N-linked (GlcNAc...) asparagine glycan is attached at Asn471.

It belongs to the glycosyl hydrolase 5 (cellulase A) family. As to expression, expression not detected.

It localises to the secreted. It catalyses the reaction Random hydrolysis of (1-&gt;4)-beta-D-mannosidic linkages in mannans, galactomannans and glucomannans.. The sequence is that of Putative mannan endo-1,4-beta-mannosidase 5 (MAN5) from Oryza sativa subsp. japonica (Rice).